The primary structure comprises 310 residues: Phytoene synthase 2, chloroplastic (310 aa).

Residues 1 to 25 constitute a chloroplast transit peptide; sequence DPDIVLPGNLGLLSEAYDRCGEVCA.

Belongs to the phytoene/squalene synthase family. In terms of assembly, monomer.

It is found in the plastid. The protein localises to the chloroplast. It catalyses the reaction 2 (2E,6E,10E)-geranylgeranyl diphosphate = 15-cis-phytoene + 2 diphosphate. The protein operates within carotenoid biosynthesis; phytoene biosynthesis; all-trans-phytoene from geranylgeranyl diphosphate: step 1/1. Its function is as follows. Catalyzes the reaction from prephytoene diphosphate to phytoene. The chain is Phytoene synthase 2, chloroplastic (PSY2) from Solanum lycopersicum (Tomato).